We begin with the raw amino-acid sequence, 239 residues long: LexA repressor (239 aa).

The H-T-H motif DNA-binding region spans 26–46 (FDEMKDALDLKSKSGIHRLIT). Residues serine 160 and lysine 198 each act as for autocatalytic cleavage activity in the active site.

This sequence belongs to the peptidase S24 family. Homodimer.

The enzyme catalyses Hydrolysis of Ala-|-Gly bond in repressor LexA.. Functionally, represses a number of genes involved in the response to DNA damage (SOS response), including recA and lexA. In the presence of single-stranded DNA, RecA interacts with LexA causing an autocatalytic cleavage which disrupts the DNA-binding part of LexA, leading to derepression of the SOS regulon and eventually DNA repair. The chain is LexA repressor from Methylobacterium sp. (strain 4-46).